The chain runs to 481 residues: Cardiolipin synthase A (481 aa).

2 helical membrane passes run 10-30 and 40-60; these read FFGYLLGLIHLLGVVAALHAL and IAWAMPLFFIPYLTLIPYLIF. 2 consecutive PLD phosphodiesterase domains span residues 220–247 and 394–421; these read VNFRNHRKIVVVDGLLGFIGGHNVGDEY and QPGFLHQKVVLVDDEVSAIGSANLDNRS. Residues histidine 225, lysine 227, aspartate 232, histidine 399, lysine 401, and aspartate 406 contribute to the active site.

This sequence belongs to the phospholipase D family. Cardiolipin synthase subfamily. ClsA sub-subfamily.

Its subcellular location is the cell inner membrane. It catalyses the reaction 2 a 1,2-diacyl-sn-glycero-3-phospho-(1'-sn-glycerol) = a cardiolipin + glycerol. Functionally, catalyzes the reversible phosphatidyl group transfer from one phosphatidylglycerol molecule to another to form cardiolipin (CL) (diphosphatidylglycerol) and glycerol. The chain is Cardiolipin synthase A from Pseudomonas putida (Arthrobacter siderocapsulatus).